The primary structure comprises 171 residues: Co-chaperone protein HscB (171 aa).

A J domain is found at 2 to 74 (DYFTLFGLPA…LTRAEYLLSL (73 aa)).

The protein belongs to the HscB family. In terms of assembly, interacts with HscA and stimulates its ATPase activity. Interacts with IscU.

Functionally, co-chaperone involved in the maturation of iron-sulfur cluster-containing proteins. Seems to help targeting proteins to be folded toward HscA. In Salmonella schwarzengrund (strain CVM19633), this protein is Co-chaperone protein HscB.